The primary structure comprises 200 residues: Probable molybdenum cofactor guanylyltransferase (200 aa).

GTP-binding positions include 9-11 (LAG), Lys-21, Asp-69, and Asp-100. Asp-100 contributes to the Mg(2+) binding site.

It belongs to the MobA family. Requires Mg(2+) as cofactor.

It localises to the cytoplasm. The catalysed reaction is Mo-molybdopterin + GTP + H(+) = Mo-molybdopterin guanine dinucleotide + diphosphate. In terms of biological role, transfers a GMP moiety from GTP to Mo-molybdopterin (Mo-MPT) cofactor (Moco or molybdenum cofactor) to form Mo-molybdopterin guanine dinucleotide (Mo-MGD) cofactor. The polypeptide is Probable molybdenum cofactor guanylyltransferase (Bacillus cereus (strain AH187)).